Consider the following 208-residue polypeptide: Rac-like GTP-binding protein ARAC8 (208 aa).

GTP is bound at residue 15–22 (GDGAVGKT). The Effector region motif lies at 37-45 (YIPTVFDNF). GTP contacts are provided by residues 62 to 66 (DTAGQ) and 120 to 123 (TKMD). Residues Cys199 and Cys205 are each lipidated (S-palmitoyl cysteine).

This sequence belongs to the small GTPase superfamily. Rho family. As to quaternary structure, interacts with ICR1. Binds to SPK1. Although this sequence has a C-terminal -CXXX, it is palmitoylated at Cys-205, rather than prenylated.

The protein localises to the membrane. Functionally, acts as a negative regulator of abscisic acid (ABA) responses. This is Rac-like GTP-binding protein ARAC8 (ARAC8) from Arabidopsis thaliana (Mouse-ear cress).